The chain runs to 607 residues: Autophagy-related protein 22-2 (607 aa).

Positions 1–29 (MTVAPPSPNSPAAELQQRPPRYPGEDTTP) are disordered. The chain crosses the membrane as a helical span at residues 41–61 (YGIAAEVFAVCGVGSFLPLTL). N-linked (GlcNAc...) asparagine glycosylation occurs at N89. Helical transmembrane passes span 119 to 139 (SFAMYTFSLAVLVQALTLISF), 151 to 170 (TLLLAFGFIGSATSMLFVFI), and 188 to 208 (CLGSSFVVLNSFLPVLVANDP). Residues 235-263 (SFSASDAESGPHPAAEAGSGTSSGPASPE) are disordered. Residues 247–263 (PAAEAGSGTSSGPASPE) are compositionally biased toward low complexity. Transmembrane regions (helical) follow at residues 274–294 (GVGLGYCAAVLVQILSISLLF), 307–327 (TLPLRFVLLLVGIWWFSFTMV), 379–399 (VLVFLAAWFLLSDAMATVSGT), and 415–435 (VGLLSITATLSGMAGAFLWPV). An N-linked (GlcNAc...) asparagine glycan is attached at N445. The next 4 helical transmembrane spans lie at 450 to 470 (LCIALFEIIPLYGMLAYIPVF), 485 to 507 (FPLAIVHGVVSGGLSSYCRSFFG), 519 to 541 (YALYAATDKGSSVIGPAIVGMLI), and 550 to 570 (GFFFIAPLILMPIPLIWIVNA). The disordered stretch occupies residues 586-607 (KGHETEMSEQTEEAEGLLARGI).

The protein belongs to the ATG22 family.

The protein localises to the vacuole membrane. In terms of biological role, vacuolar effluxer which mediate the efflux of amino acids resulting from autophagic degradation. The release of autophagic amino acids allows the maintenance of protein synthesis and viability during nitrogen starvation. In Aspergillus oryzae (strain ATCC 42149 / RIB 40) (Yellow koji mold), this protein is Autophagy-related protein 22-2 (atg22-2).